Here is a 248-residue protein sequence, read N- to C-terminus: Flavodoxin/ferredoxin--NADP reductase (248 aa).

An FAD-binding FR-type domain is found at 2-101 (ADWVTGKVTK…SEAAGFFVLD (100 aa)). FAD is bound by residues 50–53 (RAYS), tyrosine 66, 74–76 (KLS), and threonine 116. NADP(+)-binding positions include 143–144 (AR), 173–174 (SR), arginine 184, 214–216 (NPQ), and aspartate 220. 247 to 248 (YW) provides a ligand contact to FAD.

The protein belongs to the ferredoxin--NADP reductase type 1 family. FAD serves as cofactor.

Its subcellular location is the cytoplasm. The catalysed reaction is 2 reduced [2Fe-2S]-[ferredoxin] + NADP(+) + H(+) = 2 oxidized [2Fe-2S]-[ferredoxin] + NADPH. It catalyses the reaction reduced [flavodoxin] + NADP(+) = oxidized [flavodoxin] + NADPH + 2 H(+). Functionally, transports electrons between flavodoxin or ferredoxin and NADPH. The sequence is that of Flavodoxin/ferredoxin--NADP reductase (fpr) from Shigella flexneri.